The following is a 588-amino-acid chain: Disabled homolog 1 (588 aa).

Residues 1-26 (MSTETELQVAVKTSAKKDSRKKGQDR) are disordered. Residues 15 to 26 (AKKDSRKKGQDR) show a composition bias toward basic and acidic residues. Residues 36-189 (KGEGVRYKAK…CEQAVYQTIL (154 aa)) form the PID domain. Phosphotyrosine is present on residues Tyr-198, Tyr-220, and Tyr-232. Disordered regions lie at residues 224 to 243 (TSQK…NSQP), 420 to 444 (LATV…QKMG), 451 to 470 (FQMV…PSLT), and 502 to 588 (LTPV…QDGS). Polar residues predominate over residues 424-436 (PGTNDSARSSPQS). Composition is skewed to low complexity over residues 503–512 (TPVTSTTPST) and 523–534 (SSPSKSSASHVS). Ser-524 is subject to Phosphoserine; by CDK5. Positions 537-546 (TADDIFEEGF) are enriched in acidic residues.

Associates with the SH2 domains of SRC, FYN and ABL. Interacts (phosphorylated on tyrosine residues) with CRK and CRKL (via respective SH2 domain). Interacts with SIAH1, LRP8 and VLDLR. Interacts with LRP1. Interacts with APLP1 (via NPXY motif). Interacts with DAB2IP. Interacts with ZSWIM8. Phosphorylated by FYN on Tyr-198 and Tyr-220 upon reelin induction in embryonic neurons. Also found phosphorylated on Tyr-232 upon reelin induction. Also phosphorylated on Ser-524 independently of reelin signaling. Post-translationally, ubiquitinated by various cullin-5-RING E3 ubiquitin-protein ligase complexes (ECS complexes) following ligand-binding and phosphorylation, leading to its degradation. Ubiquitinated by the ECS(SOCS7) complex in the cortical plate of the developing cerebral cortex following ligand-binding and phosphorylation by FYN, leading to its degradation by the proteasome. Recognized by ZSWIM8 through a disorder targets misorder mechanism that eliminates misfolded DAB1 via ubiquitination and proteasomal degradation. As to expression, expressed mainly in brain. Specifically expressin in cortical neurons.

The protein localises to the cytoplasm. In terms of biological role, signaling adapter of the reelin-mediated signaling pathway, which regulates the migration and differentiation of postmitotic neurons during brain development. Mediates intracellular transduction of Reelin signaling following reelin (RELN)-binding to its receptor: acts by docking proteins through its phosphotyrosine residues and PID domain. This Mus musculus (Mouse) protein is Disabled homolog 1.